The primary structure comprises 959 residues: Isoleucine--tRNA ligase (959 aa).

The 'HIGH' region motif lies at 66–76; the sequence is PYANGDLHIGH. Residue Glu-592 coordinates L-isoleucyl-5'-AMP. Positions 633-637 match the 'KMSKS' region motif; that stretch reads KMSKS. Lys-636 serves as a coordination point for ATP. Zn(2+) is bound by residues Cys-922, Cys-925, Cys-942, and Cys-945.

It belongs to the class-I aminoacyl-tRNA synthetase family. IleS type 1 subfamily. In terms of assembly, monomer. The cofactor is Zn(2+).

Its subcellular location is the cytoplasm. It carries out the reaction tRNA(Ile) + L-isoleucine + ATP = L-isoleucyl-tRNA(Ile) + AMP + diphosphate. Its function is as follows. Catalyzes the attachment of isoleucine to tRNA(Ile). As IleRS can inadvertently accommodate and process structurally similar amino acids such as valine, to avoid such errors it has two additional distinct tRNA(Ile)-dependent editing activities. One activity is designated as 'pretransfer' editing and involves the hydrolysis of activated Val-AMP. The other activity is designated 'posttransfer' editing and involves deacylation of mischarged Val-tRNA(Ile). This chain is Isoleucine--tRNA ligase, found in Ralstonia pickettii (strain 12J).